The chain runs to 322 residues: Acetyl-coenzyme A carboxylase carboxyl transferase subunit alpha (322 aa).

Residues 39-293 enclose the CoA carboxyltransferase C-terminal domain; it reads RLAAKSQQLT…KRALAESLRQ (255 aa).

This sequence belongs to the AccA family. As to quaternary structure, acetyl-CoA carboxylase is a heterohexamer composed of biotin carboxyl carrier protein (AccB), biotin carboxylase (AccC) and two subunits each of ACCase subunit alpha (AccA) and ACCase subunit beta (AccD).

Its subcellular location is the cytoplasm. The enzyme catalyses N(6)-carboxybiotinyl-L-lysyl-[protein] + acetyl-CoA = N(6)-biotinyl-L-lysyl-[protein] + malonyl-CoA. It functions in the pathway lipid metabolism; malonyl-CoA biosynthesis; malonyl-CoA from acetyl-CoA: step 1/1. Component of the acetyl coenzyme A carboxylase (ACC) complex. First, biotin carboxylase catalyzes the carboxylation of biotin on its carrier protein (BCCP) and then the CO(2) group is transferred by the carboxyltransferase to acetyl-CoA to form malonyl-CoA. The polypeptide is Acetyl-coenzyme A carboxylase carboxyl transferase subunit alpha (Ralstonia nicotianae (strain ATCC BAA-1114 / GMI1000) (Ralstonia solanacearum)).